We begin with the raw amino-acid sequence, 417 residues long: Xylulose 5-phosphate/phosphate translocator, chloroplastic (417 aa).

The N-terminal 82 residues, 1–82 (MISLNLSPSL…GFSRKPRSIA (82 aa)), are a transit peptide targeting the chloroplast. Residues 66-102 (TNPESSSGFSRKPRSIAAVGSSDSNPDEKSDLGEAEK) form a disordered region. N-acetylalanine is present on Ala-83. Residues 91-102 (PDEKSDLGEAEK) show a composition bias toward basic and acidic residues. 9 helical membrane-spanning segments follow: residues 109–129 (TLQL…FNIF), 141–161 (WLLA…LWSF), 173–193 (FIIA…SACV), 198–218 (VAVS…VIFS), 225–245 (YPLA…LAAV), 247–267 (EVSF…GFVL), 287–307 (LYGC…IFVE), 318–338 (AIAS…SGVF), and 384–404 (LNAL…QATA). The EamA domain occupies 127 to 243 (NIFNKKALNV…LPIVMGCSLA (117 aa)).

The protein belongs to the TPT transporter family. TPT (TC 2.A.7.9) subfamily. Widely expressed.

Its subcellular location is the plastid. It is found in the chloroplast membrane. Sugar phosphate/phosphate translocator that transports inorganic phosphate, triose phosphate, 3-phosphoglycerate, xylulose 5-phosphate (Xul-5-P) and to a lesser extent ribulose 5-phosphate. Does not transport ribose 5-phosphate or hexose phosphates. Provides cytosolic Xul-5-P to the chloroplast, where it is used as an intermediate in the plastidic pentose phosphate pathways. In Arabidopsis thaliana (Mouse-ear cress), this protein is Xylulose 5-phosphate/phosphate translocator, chloroplastic (XPT).